The chain runs to 592 residues: Inactive metallocarboxypeptidase ECM14 (592 aa).

Residues 1–21 (MRQFTHGTLLAILALANTISA) form the signal peptide. A propeptide spanning residues 22–174 (IPSFSANNYP…QTVYESYPSS (153 aa)) is cleaved from the precursor. Polar residues predominate over residues 170–179 (SYPSSSQRPT). The tract at residues 170-191 (SYPSSSQRPTDNGRGFLPSRES) is disordered. The 320-residue stretch at 202 to 521 (DYQPLSVIGP…NAVMVLGKFL (320 aa)) folds into the Peptidase M14 domain. Zn(2+)-binding residues include histidine 264 and glutamate 267. Substrate is bound by residues 264-267 (HARE), arginine 322, and 339-340 (DR). Cysteines 333 and 356 form a disulfide. Residue asparagine 349 is glycosylated (N-linked (GlcNAc...) asparagine). Residue histidine 396 participates in Zn(2+) binding. Substrate is bound at residue 397–398 (SY). Residues 542–592 (ADKPILDDGDDDEEEDGQDKNDDSWIPDEYKNDNDHDDDDDGWGLRRRRKR) are disordered. Positions 548 to 558 (DDGDDDEEEDG) are enriched in acidic residues. Over residues 559-575 (QDKNDDSWIPDEYKNDN) the composition is skewed to basic and acidic residues.

It belongs to the peptidase M14 family. It depends on Zn(2+) as a cofactor.

The protein localises to the vacuole. It is found in the secreted. In terms of biological role, inactive carboxypeptidase that may play a role in cell wall organization and biogenesis. This is Inactive metallocarboxypeptidase ECM14 (ECM14) from Blastomyces gilchristii (strain SLH14081) (Blastomyces dermatitidis).